The following is a 414-amino-acid chain: Heterogeneous nuclear ribonucleoprotein F (414 aa).

M1 is subject to N-acetylmethionine. At M2 the chain carries N-acetylmethionine; in Heterogeneous nuclear ribonucleoprotein F, N-terminally processed. In terms of domain architecture, RRM 1 spans 11 to 90; sequence FVVKLRGLPW…RYIEVFKSHR (80 aa). A Glycyl lysine isopeptide (Lys-Gly) (interchain with G-Cter in SUMO) cross-link involves residue K72. The segment at 81-86 is interaction with RNA; that stretch reads RYIEVF. A Glycyl lysine isopeptide (Lys-Gly) (interchain with G-Cter in SUMO2) cross-link involves residue K87. Phosphoserine is present on residues S104 and S161. The 78-residue stretch at 111–188 folds into the RRM 2 domain; the sequence is GFVRLRGLPF…RYIEVFKSSQ (78 aa). Residue K167 forms a Glycyl lysine isopeptide (Lys-Gly) (interchain with G-Cter in SUMO2) linkage. The interval 179 to 184 is interaction with RNA; sequence RYIEVF. K185 participates in a covalent cross-link: Glycyl lysine isopeptide (Lys-Gly) (interchain with G-Cter in SUMO2). Phosphoserine occurs at positions 187, 193, and 195. Residue K200 is modified to N6-acetyllysine; alternate. K200 is covalently cross-linked (Glycyl lysine isopeptide (Lys-Gly) (interchain with G-Cter in SUMO2); alternate). A Phosphothreonine modification is found at T215. Position 224 is an N6-acetyllysine; alternate (K224). A Glycyl lysine isopeptide (Lys-Gly) (interchain with G-Cter in SUMO2); alternate cross-link involves residue K224. S265 carries the phosphoserine modification. The 78-residue stretch at 289 to 366 folds into the RRM 3 domain; the sequence is HCVHMRGLPY…IELFLNSTTG (78 aa). The interval 355–360 is interaction with RNA; it reads RYIELF.

In terms of assembly, identified in the spliceosome C complex. Interacts with AGO1, AGO2, TBP and TXNL4/DIM1. Sumoylated.

It localises to the nucleus. The protein resides in the nucleoplasm. Component of the heterogeneous nuclear ribonucleoprotein (hnRNP) complexes which provide the substrate for the processing events that pre-mRNAs undergo before becoming functional, translatable mRNAs in the cytoplasm. Plays a role in the regulation of alternative splicing events. Binds G-rich sequences in pre-mRNAs and keeps target RNA in an unfolded state. This Bos taurus (Bovine) protein is Heterogeneous nuclear ribonucleoprotein F (HNRNPF).